The chain runs to 1019 residues: Photoactivated adenylate cyclase subunit alpha-like protein ST- (1019 aa).

A BLUF 1 domain is found at 55–148; it reads LRRLMYLSAS…GRMYGEWHMK (94 aa). The 129-residue stretch at 204 to 332 folds into the Guanylate cyclase 1 domain; that stretch reads VLTFIYLVEF…DCINTASRIT (129 aa). A BLUF 2 domain is found at 467–559; it reads LITLTYISQA…RVYGTPLDMT (93 aa). A Guanylate cyclase 2 domain is found at 615–744; sequence VMLATDICSF…EVSARVMAVE (130 aa). 3 disordered regions span residues 801–846, 887–923, and 963–993; these read EDHL…TRPH, QIAA…DQPA, and EGHR…NRAT. Residues 821–834 are compositionally biased toward basic residues; sequence RHQRPGPGRPRRGH.

This sequence belongs to the adenylyl cyclase class-4/guanylyl cyclase family. In terms of assembly, heterotetramer of two alpha and two beta subunits.

The protein localises to the cell projection. It localises to the cilium. It is found in the flagellum. The protein is Photoactivated adenylate cyclase subunit alpha-like protein ST- of Euglena gracilis.